The primary structure comprises 832 residues: Protein P (832 aa).

A terminal protein domain (TP) region spans residues methionine 1–glutamine 177. A spacer region spans residues lysine 178 to leucine 335. Disordered stretches follow at residues phenylalanine 186–serine 229 and tyrosine 275–serine 305. The polymerase/reverse transcriptase domain (RT) stretch occupies residues glutamate 336 to glutamine 679. In terms of domain architecture, Reverse transcriptase spans glutamate 346–isoleucine 589. Positions 418, 540, and 541 each coordinate Mg(2+).

Belongs to the hepadnaviridae P protein family.

The enzyme catalyses DNA(n) + a 2'-deoxyribonucleoside 5'-triphosphate = DNA(n+1) + diphosphate. It carries out the reaction Endonucleolytic cleavage to 5'-phosphomonoester.. Its activity is regulated as follows. Activated by host HSP70 and HSP40 in vitro to be able to bind the epsilon loop of the pgRNA. Because deletion of the RNase H region renders the protein partly chaperone-independent, the chaperones may be needed indirectly to relieve occlusion of the RNA-binding site by this domain. Inhibited by several reverse-transcriptase inhibitors: Lamivudine, Adefovir and Entecavir. Multifunctional enzyme that converts the viral RNA genome into dsDNA in viral cytoplasmic capsids. This enzyme displays a DNA polymerase activity that can copy either DNA or RNA templates, and a ribonuclease H (RNase H) activity that cleaves the RNA strand of RNA-DNA heteroduplexes in a partially processive 3'- to 5'-endonucleasic mode. Neo-synthesized pregenomic RNA (pgRNA) are encapsidated together with the P protein, and reverse-transcribed inside the nucleocapsid. Initiation of reverse-transcription occurs first by binding the epsilon loop on the pgRNA genome, and is initiated by protein priming, thereby the 5'-end of (-)DNA is covalently linked to P protein. Partial (+)DNA is synthesized from the (-)DNA template and generates the relaxed circular DNA (RC-DNA) genome. After budding and infection, the RC-DNA migrates in the nucleus, and is converted into a plasmid-like covalently closed circular DNA (cccDNA). The activity of P protein does not seem to be necessary for cccDNA generation, and is presumably released from (+)DNA by host nuclear DNA repair machinery. The sequence is that of Protein P from Homo sapiens (Human).